We begin with the raw amino-acid sequence, 145 residues long: 3-hydroxyacyl-[acyl-carrier-protein] dehydratase FabZ (145 aa).

Histidine 47 is an active-site residue.

This sequence belongs to the thioester dehydratase family. FabZ subfamily.

The protein resides in the cytoplasm. It catalyses the reaction a (3R)-hydroxyacyl-[ACP] = a (2E)-enoyl-[ACP] + H2O. Involved in unsaturated fatty acids biosynthesis. Catalyzes the dehydration of short chain beta-hydroxyacyl-ACPs and long chain saturated and unsaturated beta-hydroxyacyl-ACPs. This Methylobacillus flagellatus (strain ATCC 51484 / DSM 6875 / VKM B-1610 / KT) protein is 3-hydroxyacyl-[acyl-carrier-protein] dehydratase FabZ.